The sequence spans 408 residues: S-adenosylmethionine synthase (408 aa).

140 to 145 (GQGSVD) contacts ATP.

Belongs to the AdoMet synthase 2 family. It depends on Mg(2+) as a cofactor.

It carries out the reaction L-methionine + ATP + H2O = S-adenosyl-L-methionine + phosphate + diphosphate. Its pathway is amino-acid biosynthesis; S-adenosyl-L-methionine biosynthesis; S-adenosyl-L-methionine from L-methionine: step 1/1. Functionally, catalyzes the formation of S-adenosylmethionine from methionine and ATP. The chain is S-adenosylmethionine synthase from Caldivirga maquilingensis (strain ATCC 700844 / DSM 13496 / JCM 10307 / IC-167).